The sequence spans 453 residues: tRNA-2-methylthio-N(6)-dimethylallyladenosine synthase (453 aa).

One can recognise an MTTase N-terminal domain in the interval 17–135 (GTFFIETWGC…FPEYLNRAKQ (119 aa)). The [4Fe-4S] cluster site is built by Cys-26, Cys-62, Cys-96, Cys-172, Cys-176, and Cys-179. Residues 158–388 (RKSSTKAFVT…VEVVNKSCEK (231 aa)) enclose the Radical SAM core domain. One can recognise a TRAM domain in the interval 391-453 (KKYQDRIVKV…LSFSLEGEEV (63 aa)).

This sequence belongs to the methylthiotransferase family. MiaB subfamily. As to quaternary structure, monomer. [4Fe-4S] cluster serves as cofactor.

It localises to the cytoplasm. It catalyses the reaction N(6)-dimethylallyladenosine(37) in tRNA + (sulfur carrier)-SH + AH2 + 2 S-adenosyl-L-methionine = 2-methylsulfanyl-N(6)-dimethylallyladenosine(37) in tRNA + (sulfur carrier)-H + 5'-deoxyadenosine + L-methionine + A + S-adenosyl-L-homocysteine + 2 H(+). Catalyzes the methylthiolation of N6-(dimethylallyl)adenosine (i(6)A), leading to the formation of 2-methylthio-N6-(dimethylallyl)adenosine (ms(2)i(6)A) at position 37 in tRNAs that read codons beginning with uridine. This chain is tRNA-2-methylthio-N(6)-dimethylallyladenosine synthase, found in Clostridium tetani (strain Massachusetts / E88).